We begin with the raw amino-acid sequence, 131 residues long: Fumarate reductase subunit C (131 aa).

2 consecutive transmembrane segments (helical) span residues 60–80 (FVGF…LAAA) and 110–130 (IKGL…VALF).

This sequence belongs to the FrdC family. In terms of assembly, part of an enzyme complex containing four subunits: a flavoprotein (FrdA), an iron-sulfur protein (FrdB), and two hydrophobic anchor proteins (FrdC and FrdD).

Its subcellular location is the cell inner membrane. Two distinct, membrane-bound, FAD-containing enzymes are responsible for the catalysis of fumarate and succinate interconversion; fumarate reductase is used in anaerobic growth, and succinate dehydrogenase is used in aerobic growth. Anchors the catalytic components of the fumarate reductase complex to the cell inner membrane, binds quinones. The chain is Fumarate reductase subunit C from Enterobacter sp. (strain 638).